We begin with the raw amino-acid sequence, 417 residues long: Serine protease hepsin (417 aa).

The Cytoplasmic portion of the chain corresponds to 1–23 (MAQKEGGRTVPCCSRPKVAALTA). The chain crosses the membrane as a helical; Signal-anchor for type II membrane protein span at residues 24-44 (GTLLLLTAIGAASWAIVAVLL). Residues 45–417 (RSDQEPLYPV…SEASGMVTQL (373 aa)) lie on the Extracellular side of the membrane. The region spanning 54 to 151 (VQVSSADARL…RGRFLATICQ (98 aa)) is the SRCR domain. 8 disulfides stabilise this stretch: C77–C140, C90–C150, C119–C138, C153–C277, C188–C204, C291–C359, C322–C338, and C349–C381. A glycan (N-linked (GlcNAc...) asparagine) is linked at N112. A Peptidase S1 domain is found at 163–405 (IVGGRDTSLG…FREWIFQAIK (243 aa)). Active-site charge relay system residues include H203 and D257. S353 serves as the catalytic Charge relay system.

This sequence belongs to the peptidase S1 family.

It is found in the membrane. It carries out the reaction Cleavage after basic amino-acid residues, with Arg strongly preferred to Lys.. In terms of biological role, plays an essential role in cell growth and maintenance of cell morphology. May mediate the activating cleavage of HGF and MST1/HGFL. Plays a role in the proteolytic processing of ACE2. The protein is Serine protease hepsin (HPN) of Pongo abelii (Sumatran orangutan).